A 1373-amino-acid chain; its full sequence is Disease resistance protein RRS1 (1373 aa).

Residues 5–146 (EKDEEFVCIS…EIVRDVYETH (142 aa)) enclose the TIR domain. In terms of domain architecture, NB-ARC spans 170–421 (IGIRCVGIWG…LLEGCGFFPH (252 aa)). An ATP-binding site is contributed by 179 to 186 (GMPGIGKT). LRR repeat units lie at residues 498–522 (SEEI…AFKN), 535–553 (NPEV…HSLP), 554–575 (NELR…NFDP), 577–598 (HLVE…TKNL), 621–646 (AENL…RLLR), 665–688 (PPNI…TVKP), 742–766 (LPNM…SIQG), 768–793 (PRFL…SLEI), and 831–854 (PRNL…PLSL). A Nuclear localization signal motif is present at residues 988-1005 (RNFHCWAPGKVVPKVRKD). Positions 1204–1272 (IPAIDEGDLW…YLSEHNHPRP (69 aa)) form a DNA-binding region, WRKY. The interval 1300–1323 (RVFQNKDEPNKPHLPSSSTPPGNA) is disordered.

In terms of assembly, interacts with PopP2, a R.solanacearum type III effector.

The protein localises to the nucleus. Its function is as follows. Transcription factor. Interacts specifically with the W box (5'-(T)TGAC[CT]-3'), a frequently occurring elicitor-responsive cis-acting element. Also acts as a disease resistance protein involved in resistance to fungal and bacterial pathogens, including R.solanacearum, P.syringae pv. tomato and C.higginsianum. The sequence is that of Disease resistance protein RRS1 from Arabidopsis thaliana (Mouse-ear cress).